Consider the following 596-residue polypeptide: Fructan 1-exohydrolase w2 (596 aa).

Positions 1–20 (MAQAWAFLLPVLVLGSYVTS) are cleaved as a signal peptide. D75 is a catalytic residue. N-linked (GlcNAc...) asparagine glycans are attached at residues N168, N236, and N248. A disulfide bridge connects residues C446 and C492. The N-linked (GlcNAc...) asparagine glycan is linked to N567.

The protein belongs to the glycosyl hydrolase 32 family.

The enzyme catalyses Hydrolysis of terminal, non-reducing (2-&gt;1)-linked beta-D-fructofuranose residues in fructans.. Inhibited by sucrose. In terms of biological role, hydrolyzes inulin-type beta-(2,1)-fructans, but not beta-(2,1)-linkages in branched fructans. Has low activity against beta-(2,6)-linked fructans. May play a role as a beta-(2,1)-trimmer during graminan biosynthesis. This is Fructan 1-exohydrolase w2 from Triticum aestivum (Wheat).